We begin with the raw amino-acid sequence, 260 residues long: tRNA (guanine-N(1)-)-methyltransferase (260 aa).

Residues Gly-117 and 137–142 (LGDFVL) each bind S-adenosyl-L-methionine.

This sequence belongs to the RNA methyltransferase TrmD family. Homodimer.

It is found in the cytoplasm. The catalysed reaction is guanosine(37) in tRNA + S-adenosyl-L-methionine = N(1)-methylguanosine(37) in tRNA + S-adenosyl-L-homocysteine + H(+). Its function is as follows. Specifically methylates guanosine-37 in various tRNAs. In Cupriavidus necator (strain ATCC 17699 / DSM 428 / KCTC 22496 / NCIMB 10442 / H16 / Stanier 337) (Ralstonia eutropha), this protein is tRNA (guanine-N(1)-)-methyltransferase.